A 102-amino-acid polypeptide reads, in one-letter code: C-X-C motif chemokine 10 (102 aa).

Positions Met1–Gly19 are cleaved as a signal peptide. The residue at position 24 (Arg24) is a Citrulline. 2 disulfides stabilise this stretch: Cys28–Cys55 and Cys30–Cys72.

The protein belongs to the intercrine alpha (chemokine CxC) family. In terms of assembly, monomer, dimer, and tetramer. Interacts with CXCR3 (via N-terminus).

The protein localises to the secreted. Its function is as follows. Pro-inflammatory cytokine that is involved in a wide variety of processes such as chemotaxis, differentiation, and activation of peripheral immune cells, regulation of cell growth, apoptosis and modulation of angiostatic effects. Plays thereby an important role during viral infections by stimulating the activation and migration of immune cells to the infected sites. Mechanistically, binding of CXCL10 to the CXCR3 receptor activates G protein-mediated signaling and results in downstream activation of phospholipase C-dependent pathway, an increase in intracellular calcium production and actin reorganization. In turn, recruitment of activated Th1 lymphocytes occurs at sites of inflammation. Activation of the CXCL10/CXCR3 axis also plays an important role in neurons in response to brain injury for activating microglia, the resident macrophage population of the central nervous system, and directing them to the lesion site. This recruitment is an essential element for neuronal reorganization. The sequence is that of C-X-C motif chemokine 10 (CXCL10) from Bos taurus (Bovine).